A 75-amino-acid polypeptide reads, in one-letter code: UPF0352 protein YejL (75 aa).

This sequence belongs to the UPF0352 family.

The polypeptide is UPF0352 protein YejL (Salmonella agona (strain SL483)).